The primary structure comprises 281 residues: MSSYQNHKALAELTLGKPTAYCDYYDATLLQAVPRSMNREPLGLYPDNLPFHGADIWTLYELSWLNSNGLPQVAVGEISLNADSINLIESKSFKLYLNSFNQTIFADKESVRMTLQRDLAACAQGNVSVALYDLDEITGQPISNFNGECLDKQDIRIDSYEFNADYLQGAAGKDHVEESLVSHLLKSNCLITHQPDWGSVQIHYRGPQIDHEALLRYLVSFRHHNEFHEQCVERIFNDIMRFCQPETLTVYARYTRRGGLDINPWRSNTDFVPLTGRLARQ.

88–90 serves as a coordination point for substrate; that stretch reads IES. 90-91 provides a ligand contact to NADPH; the sequence is SK. Cysteine 189 (thioimide intermediate) is an active-site residue. Residue aspartate 196 is the Proton donor of the active site. 228–229 contributes to the substrate binding site; the sequence is HE. Residue 257–258 participates in NADPH binding; it reads RG.

It belongs to the GTP cyclohydrolase I family. QueF type 2 subfamily. In terms of assembly, homodimer.

Its subcellular location is the cytoplasm. It carries out the reaction 7-aminomethyl-7-carbaguanine + 2 NADP(+) = 7-cyano-7-deazaguanine + 2 NADPH + 3 H(+). The protein operates within tRNA modification; tRNA-queuosine biosynthesis. Functionally, catalyzes the NADPH-dependent reduction of 7-cyano-7-deazaguanine (preQ0) to 7-aminomethyl-7-deazaguanine (preQ1). The protein is NADPH-dependent 7-cyano-7-deazaguanine reductase of Yersinia pestis bv. Antiqua (strain Antiqua).